Consider the following 842-residue polypeptide: Glycogen phosphorylase, muscle form (842 aa).

Residue S2 is modified to N-acetylserine. The residue at position 15 (S15) is a Phosphoserine; by PHK; in form phosphorylase A. 2 residues coordinate AMP: D43 and Y76. 2 positions are modified to phosphotyrosine: Y204 and Y227. 310–319 (RRFKSSKFGC) is a binding site for AMP. S430 carries the post-translational modification Phosphoserine. The residue at position 473 (Y473) is a Phosphotyrosine. Position 514 is a phosphoserine (S514). Residue K681 is modified to N6-(pyridoxal phosphate)lysine. Phosphoserine is present on residues S747 and S748.

Belongs to the glycogen phosphorylase family. Homodimer. Homotetramer; to form the enzymatically active phosphorylase A. Pyridoxal 5'-phosphate is required as a cofactor. In terms of processing, phosphorylation of Ser-15 converts phosphorylase B (unphosphorylated) to phosphorylase A.

The catalysed reaction is [(1-&gt;4)-alpha-D-glucosyl](n) + phosphate = [(1-&gt;4)-alpha-D-glucosyl](n-1) + alpha-D-glucose 1-phosphate. Its activity is regulated as follows. Allosterically regulated through the non-covalent binding of metabolites, being activated by AMP and inhibited by ATP, ADP, and glucose-6-phosphate. The activity is also controlled by post-translational modifications including phosphorylation. Allosteric enzyme that catalyzes the rate-limiting step in glycogen catabolism, the phosphorolytic cleavage of glycogen to produce glucose-1-phosphate, and plays a central role in maintaining cellular and organismal glucose homeostasis. The protein is Glycogen phosphorylase, muscle form of Macaca fascicularis (Crab-eating macaque).